The primary structure comprises 139 residues: Autophagy-related protein 31 (139 aa).

Belongs to the ATG31 family. As to quaternary structure, forms a stable complex with ATG17 and ATG29. Interacts directly with ATG29. The ATG17-ATG29-ATG31 complex interacts with the ATG1-ATG13 complex. Note=The interaction with the ATG1-ATG13 complex is induced by starvation.

The protein resides in the preautophagosomal structure. Plays a role in starvation-induced autophagy. Involved in mitophagy. Functions with ATG17 and ATG29 at the preautophagosomal structure (PAS) in order to form normal autophagosomes under starvation conditions. In Kluyveromyces marxianus (strain DMKU3-1042 / BCC 29191 / NBRC 104275) (Yeast), this protein is Autophagy-related protein 31.